The sequence spans 442 residues: NADH-quinone oxidoreductase subunit D (442 aa).

It belongs to the complex I 49 kDa subunit family. As to quaternary structure, NDH-1 is composed of 14 different subunits. Subunits NuoB, C, D, E, F, and G constitute the peripheral sector of the complex.

It localises to the cell membrane. The enzyme catalyses a quinone + NADH + 5 H(+)(in) = a quinol + NAD(+) + 4 H(+)(out). In terms of biological role, NDH-1 shuttles electrons from NADH, via FMN and iron-sulfur (Fe-S) centers, to quinones in the respiratory chain. The immediate electron acceptor for the enzyme in this species is believed to be a menaquinone. Couples the redox reaction to proton translocation (for every two electrons transferred, four hydrogen ions are translocated across the cytoplasmic membrane), and thus conserves the redox energy in a proton gradient. The protein is NADH-quinone oxidoreductase subunit D of Mycolicibacterium vanbaalenii (strain DSM 7251 / JCM 13017 / BCRC 16820 / KCTC 9966 / NRRL B-24157 / PYR-1) (Mycobacterium vanbaalenii).